The primary structure comprises 105 residues: Transmembrane protein 273 (105 aa).

Residues 1 to 19 (MNLGVSMLRILFLLDVGGA) form the signal peptide. Residues 20-38 (QVLATGKTPGAEIDFKYAL) lie on the Extracellular side of the membrane. A helical membrane pass occupies residues 39–59 (IGTAVGVAISAGFLALKICMI). At 60–105 (RRHLFDDDSSDLKSTPGGLSDTIPLKKRAPRRNHNFSKRDAQVIEL) the chain is on the cytoplasmic side.

The protein localises to the membrane. The sequence is that of Transmembrane protein 273 from Homo sapiens (Human).